The primary structure comprises 214 residues: Adenylate kinase (214 aa).

Residue 15–20 (GAGKGT) participates in ATP binding. An NMP region spans residues 35-64 (ASGDLFREAIKNQSVIGRKIAAIISQGGYV). AMP-binding positions include Ser36, Arg41, 62–64 (GYV), 90–93 (GYPR), and Gln97. The segment at 127-164 (NRVICNNCNSVYNLLFQKPLVENSCDQCSAKLVKRSDD) is LID. Arg128 is an ATP binding site. Cys131 and Cys134 together coordinate Zn(2+). Position 137–138 (137–138 (VY)) interacts with ATP. Positions 151 and 154 each coordinate Zn(2+). The AMP site is built by Arg161 and Arg172. Leu200 is an ATP binding site.

This sequence belongs to the adenylate kinase family. As to quaternary structure, monomer.

Its subcellular location is the cytoplasm. It catalyses the reaction AMP + ATP = 2 ADP. Its pathway is purine metabolism; AMP biosynthesis via salvage pathway; AMP from ADP: step 1/1. Functionally, catalyzes the reversible transfer of the terminal phosphate group between ATP and AMP. Plays an important role in cellular energy homeostasis and in adenine nucleotide metabolism. This chain is Adenylate kinase, found in Mycoplasma genitalium (strain ATCC 33530 / DSM 19775 / NCTC 10195 / G37) (Mycoplasmoides genitalium).